The chain runs to 88 residues: Metastasis-suppressor KiSS-1 (88 aa).

The segment covering 1-13 (SVENSRPTGQQLE) has biased composition (polar residues). Residues 1 to 88 (SVENSRPTGQ…REKDLPNYNW (88 aa)) are disordered. Over residues 33-55 (SATARLSRRGASLSSPAESSGSP) the composition is skewed to low complexity. Over residues 78-88 (QREKDLPNYNW) the composition is skewed to basic and acidic residues. Y86 is modified (phosphotyrosine).

It belongs to the KISS1 family. In the hypothalamus, expression increases with puberty in both male and female monkeys. Robust expression in the region of the arcuate nucleus (ARC).

The protein resides in the secreted. Its function is as follows. Metastasis suppressor protein. May regulate events downstream of cell-matrix adhesion, perhaps involving cytoskeletal reorganization. Generates a C-terminally amidated peptide, metastin which functions as the endogenous ligand of the G-protein coupled receptor GPR54. The receptor is essential for normal gonadotropin-released hormone physiology and for puberty. The hypothalamic KiSS1/GPR54 system is a pivotal factor in central regulation of the gonadotropic axis at puberty and in adulthood. This chain is Metastasis-suppressor KiSS-1 (KISS1), found in Macaca mulatta (Rhesus macaque).